Consider the following 366-residue polypeptide: 5-formaminoimidazole-4-carboxamide-1-(beta)-D-ribofuranosyl 5'-monophosphate synthetase (366 aa).

Residues His-27 and Ser-96 each coordinate 5-amino-1-(5-phospho-beta-D-ribosyl)imidazole-4-carboxamide. An ATP-grasp domain is found at 131–357; sequence RKWLEDAGVP…IAREIKEAVK (227 aa). Residues 154–208 and Glu-239 contribute to the ATP site; that span reads PVIV…VRFY. Asn-263 provides a ligand contact to 5-amino-1-(5-phospho-beta-D-ribosyl)imidazole-4-carboxamide. Mg(2+)-binding residues include Glu-302 and Glu-315.

This sequence belongs to the phosphohexose mutase family. Mg(2+) is required as a cofactor. The cofactor is Mn(2+).

The catalysed reaction is 5-amino-1-(5-phospho-beta-D-ribosyl)imidazole-4-carboxamide + formate + ATP = 5-formamido-1-(5-phospho-D-ribosyl)imidazole-4-carboxamide + ADP + phosphate. It functions in the pathway purine metabolism; IMP biosynthesis via de novo pathway; 5-formamido-1-(5-phospho-D-ribosyl)imidazole-4-carboxamide from 5-amino-1-(5-phospho-D-ribosyl)imidazole-4-carboxamide (formate route): step 1/1. Catalyzes the ATP- and formate-dependent formylation of 5-aminoimidazole-4-carboxamide-1-beta-d-ribofuranosyl 5'-monophosphate (AICAR) to 5-formaminoimidazole-4-carboxamide-1-beta-d-ribofuranosyl 5'-monophosphate (FAICAR) in the absence of folates. The sequence is that of 5-formaminoimidazole-4-carboxamide-1-(beta)-D-ribofuranosyl 5'-monophosphate synthetase from Korarchaeum cryptofilum (strain OPF8).